A 485-amino-acid polypeptide reads, in one-letter code: UDP-N-acetylmuramate--L-alanine ligase (485 aa).

120-126 provides a ligand contact to ATP; that stretch reads GSHGKTT.

Belongs to the MurCDEF family.

It localises to the cytoplasm. The catalysed reaction is UDP-N-acetyl-alpha-D-muramate + L-alanine + ATP = UDP-N-acetyl-alpha-D-muramoyl-L-alanine + ADP + phosphate + H(+). The protein operates within cell wall biogenesis; peptidoglycan biosynthesis. Its function is as follows. Cell wall formation. The polypeptide is UDP-N-acetylmuramate--L-alanine ligase (Rickettsia peacockii (strain Rustic)).